The chain runs to 395 residues: RNA demethylase ALKBH5 (395 aa).

Disordered regions lie at residues 1–28 and 47–83; these read MAAA…AGSR and AAEP…EEEA. An N-acetylalanine modification is found at A2. K58 participates in a covalent cross-link: Glycyl lysine isopeptide (Lys-Gly) (interchain with G-Cter in ubiquitin). Positions 60 to 83 are enriched in basic and acidic residues; sequence KYQEDSDPERSDYEEHQLQKEEEA. S65 and S70 each carry phosphoserine. Positions 68–117 form a coiled coil; it reads ERSDYEEHQLQKEEEARKVKSGIRQIRLFSQDECSKIEARIDEVVSRAEK. Y72 carries the phosphotyrosine modification. Residue K87 forms a Glycyl lysine isopeptide (Lys-Gly) (interchain with G-Cter in SUMO1) linkage. S88 is subject to Phosphoserine. An N6-acetyllysine modification is found at K133. Y140 is a catalytic residue. The 2-oxoglutarate site is built by N194, Y196, and H205. A disulfide bridge links C231 with C268. K236 is subject to N6-acetyllysine. 2-oxoglutarate-binding residues include H267 and R278. The segment at 294–395 is disordered; it reads ETKSLSSSTL…PTRKVKMRRH (102 aa). Over residues 296–306 the composition is skewed to low complexity; sequence KSLSSSTLPPS. A Glycyl lysine isopeptide (Lys-Gly) (interchain with G-Cter in SUMO1) cross-link involves residue K322. Phosphoserine is present on S326. A Glycyl lysine isopeptide (Lys-Gly) (interchain with G-Cter in SUMO2) cross-link involves residue K329. The segment covering 329 to 350 has biased composition (basic and acidic residues); that stretch reads KADPDAAHRPRILEMDKEENRR. R360 bears the Omega-N-methylarginine mark. S362, S372, S375, and S385 each carry phosphoserine.

Belongs to the alkB family. As to quaternary structure, monomer. Interacts with RBM33; promoting desumoylation by SENP1 and recruitment to N(6)-methyladenosine-containing mRNAs. Interacts (when acetylated by KAT8) with PSPC1; interaction facilitates recognition of N(6)-methyladenosine (m6A) mRNA. The cofactor is Fe(2+). Post-translationally, phosphorylated at Ser-88 and Ser-326 in response to reactive oxygen species (ROS), promoting sumoylation and inactivation. In terms of processing, acetylated by KAT8 at Lys-236, promoting interaction with PSPC1, thereby facilitating recognition of N(6)-methyladenosine (m6A) mRNA by ALKBH5. Deacetylated at Lys-236 by HDAC7. Sumoylated at Lys-87 and Lys-322 by PIAS4 following phosphorylation at Ser-88 and Ser-326 in response to reactive oxygen species (ROS), inhibiting the RNA demethylase activity. Desumoylated by SENP1; relieving RNA demethylase inhibition, leading to N(6)-methyladenosine-containing mRNAs demethylation. Post-translationally, ubiquitinated at Lys-58 via 'Lys-48'-linked polyubiquitin chain, leading to its degradation by the proteasome. Deubiquitinated at Lys-58 by USP9X, promoting its stabilizazion. In terms of tissue distribution, widely expressed, with highest expression in testis. In testis, present in almost all testicular cell types except elongating and elongated spermatids (at protein level). Among spermatogenic cells, present at high level in spermatocytes; medium levels in spermatogonia and lower levels in round spermatids (at protein level).

It is found in the nucleus speckle. It catalyses the reaction an N(6)-methyladenosine in mRNA + 2-oxoglutarate + O2 = an adenosine in mRNA + formaldehyde + succinate + CO2. With respect to regulation, RNA demethylase activity is inhibited following sumoylation. Inhibition is relieved following desumoylation. Inhibited by histone demethylase inhibitor IOX1. Functionally, dioxygenase that specifically demethylates N(6)-methyladenosine (m6A) RNA, the most prevalent internal modification of messenger RNA (mRNA) in higher eukaryotes. Demethylates RNA by oxidative demethylation, which requires molecular oxygen, alpha-ketoglutarate and iron. Demethylation of m6A mRNA affects mRNA processing, translation and export. Can also demethylate N(6)-methyladenosine in single-stranded DNA (in vitro). Required for the late meiotic and haploid phases of spermatogenesis by mediating m6A demethylation in spermatocytes and round spermatids: m6A demethylation of target transcripts is required for correct splicing and the production of longer 3'-UTR mRNAs in male germ cells. Involved in paraspeckle assembly, a nuclear membraneless organelle, by undergoing liquid-liquid phase separation. Paraspeckle assembly is coupled with m6A demethylation of RNAs, such as NEAT1 non-coding RNA. Also acts as a negative regulator of T-cell development: inhibits gamma-delta T-cell proliferation via demethylation of JAG1 and NOTCH2 transcripts. Inhibits regulatory T-cell (Treg) recruitment by mediating demethylation and destabilization of CCL28 mRNAs. The sequence is that of RNA demethylase ALKBH5 from Mus musculus (Mouse).